The sequence spans 533 residues: MTEQATTTDELAFTRPYGEQEKQILTAEAVEFLTELVTHFTPQRNKLLAARIQQQQDIDNGTLPDFISETASIRDADWKIRGIPADLEDRRVEITGPVERKMVINALNANVKVFMADFEDSLAPDWNKVIDGQINLRDAVNGTISYTNEAGKIYQLKPNPAVLICRVRGLHLPEKHVTWRGEAIPGSLFDFALYFFHNYQALLAKGSGPYFYLPKTQSWQEAAWWSEVFSYAEDRFNLPRGTIKATLLIETLPAVFQMDEILHALRDHIVGLNCGRWDYIFSYIKTLKNYPDRVLPDRQAVTMDKPFLNAYSRLLIKTCHKRGAFAMGGMAAFIPSKDEEHNNQVLNKVKADKSLEANNGHDGTWIAHPGLADTAMAVFNDILGSRKNQLEVMREQDAPITADQLLAPCDGERTEEGMRANIRVAVQYIEAWISGNGCVPIYGLMEDAATAEISRTSIWQWIHHQKTLSNGKPVTKALFRQMLGEEMKVIASELGEERFSQGRFDDAARLMEQITTSDELIDFLTLPGYRLLA.

Arg-166 serves as the catalytic Proton acceptor. Asp-447 (proton donor) is an active-site residue.

This sequence belongs to the malate synthase family.

Its subcellular location is the cytoplasm. The enzyme catalyses glyoxylate + acetyl-CoA + H2O = (S)-malate + CoA + H(+). It participates in carbohydrate metabolism; glyoxylate cycle; (S)-malate from isocitrate: step 2/2. The chain is Malate synthase A (aceB) from Escherichia coli (strain K12).